Reading from the N-terminus, the 264-residue chain is Large ribosomal subunit protein uL2 (264 aa).

The protein belongs to the universal ribosomal protein uL2 family.

Its subcellular location is the cytoplasm. This Tetrahymena thermophila (strain SB210) protein is Large ribosomal subunit protein uL2 (RPL8).